A 206-amino-acid chain; its full sequence is Probable glutathione peroxidase 3, mitochondrial (206 aa).

Residues 1–12 constitute a mitochondrion transit peptide; sequence MPRSSRWVNQRA. The active site involves Cys-80.

The protein belongs to the glutathione peroxidase family. Interacts with ABI1 and ABI2. Ubiquitous.

Its subcellular location is the mitochondrion. It carries out the reaction 2 glutathione + H2O2 = glutathione disulfide + 2 H2O. Its activity is regulated as follows. The redox states are modulated by H(2)O(2). May constitute a glutathione peroxidase-like protective system against oxidative stresses. Involved positively in abscisic acid (ABA) signaling pathway that regulates numerous ABA responses, such as stomatal closure, seed germination and inhibition of vegetative growth. Oxidizes and represses target proteins (e.g. the phosphatase activity of ABI1 and ABI2) when oxidized by H(2)O(2), probably after ABA signaling. Modulates the calcium channel activity in guard cells in response to ABA or H(2)O(2). Confers tolerance to drought stress, by enhancing the ABA-dependent stomatal closure. In Arabidopsis thaliana (Mouse-ear cress), this protein is Probable glutathione peroxidase 3, mitochondrial (GPX3).